Here is a 409-residue protein sequence, read N- to C-terminus: Arginine deiminase (409 aa).

The Amidino-cysteine intermediate role is filled by cysteine 399.

The protein belongs to the arginine deiminase family.

Its subcellular location is the cytoplasm. The enzyme catalyses L-arginine + H2O = L-citrulline + NH4(+). Its pathway is amino-acid degradation; L-arginine degradation via ADI pathway; carbamoyl phosphate from L-arginine: step 1/2. The chain is Arginine deiminase from Streptococcus pneumoniae (strain P1031).